Here is a 182-residue protein sequence, read N- to C-terminus: Probable RNA 2'-phosphotransferase (182 aa).

Belongs to the KptA/TPT1 family.

In terms of biological role, removes the 2'-phosphate from RNA via an intermediate in which the phosphate is ADP-ribosylated by NAD followed by a presumed transesterification to release the RNA and generate ADP-ribose 1''-2''-cyclic phosphate (APPR&gt;P). May function as an ADP-ribosylase. This is Probable RNA 2'-phosphotransferase from Acetivibrio thermocellus (strain ATCC 27405 / DSM 1237 / JCM 9322 / NBRC 103400 / NCIMB 10682 / NRRL B-4536 / VPI 7372) (Clostridium thermocellum).